A 70-amino-acid polypeptide reads, in one-letter code: Gas vesicle protein A (70 aa).

It belongs to the gas vesicle GvpA family. The gas vesicle shell is 2 nm thick and consists of a single layer of this protein. It forms helical ribs nearly perpendicular to the long axis of the vesicle.

The protein resides in the gas vesicle shell. Gas vesicles are hollow, gas filled proteinaceous nanostructures found in some microorganisms. During planktonic growth they allow positioning of the organism at a favorable depth for light or nutrient acquisition. GvpA forms the protein shell. The protein is Gas vesicle protein A of Cereibacter sphaeroides (strain ATCC 17023 / DSM 158 / JCM 6121 / CCUG 31486 / LMG 2827 / NBRC 12203 / NCIMB 8253 / ATH 2.4.1.) (Rhodobacter sphaeroides).